A 276-amino-acid polypeptide reads, in one-letter code: Glutamate 5-kinase (276 aa).

Position 14 (Lys-14) interacts with ATP. Substrate is bound by residues Ser-54, Asp-141, and Asn-157. Residues 177-178 (SD) and 219-225 (TGGMLTK) contribute to the ATP site.

It belongs to the glutamate 5-kinase family.

The protein localises to the cytoplasm. The enzyme catalyses L-glutamate + ATP = L-glutamyl 5-phosphate + ADP. Its pathway is amino-acid biosynthesis; L-proline biosynthesis; L-glutamate 5-semialdehyde from L-glutamate: step 1/2. Its function is as follows. Catalyzes the transfer of a phosphate group to glutamate to form L-glutamate 5-phosphate. The polypeptide is Glutamate 5-kinase (Listeria welshimeri serovar 6b (strain ATCC 35897 / DSM 20650 / CCUG 15529 / CIP 8149 / NCTC 11857 / SLCC 5334 / V8)).